The sequence spans 90 residues: Sec-independent protein translocase protein TatA (90 aa).

Residues 2–22 traverse the membrane as a helical segment; it reads GVGGISIWQLLIVLVIILLLF. 2 stretches are compositionally biased toward basic and acidic residues: residues 45 to 68 and 76 to 90; these read LRDE…HKAE and ADAD…DEHK. Positions 45–90 are disordered; it reads LRDEERRDAEEAATIEHKQAHKAENPSQRQQADADFKIKSGNDEHK.

Belongs to the TatA/E family. In terms of assembly, the Tat system comprises two distinct complexes: a TatABC complex, containing multiple copies of TatA, TatB and TatC subunits, and a separate TatA complex, containing only TatA subunits. Substrates initially bind to the TatABC complex, which probably triggers association of the separate TatA complex to form the active translocon.

It is found in the cell inner membrane. Its function is as follows. Part of the twin-arginine translocation (Tat) system that transports large folded proteins containing a characteristic twin-arginine motif in their signal peptide across membranes. TatA could form the protein-conducting channel of the Tat system. The chain is Sec-independent protein translocase protein TatA from Nitrosococcus oceani (strain ATCC 19707 / BCRC 17464 / JCM 30415 / NCIMB 11848 / C-107).